Consider the following 133-residue polypeptide: uncharacterized protein (133 aa).

One can recognise an HIT domain in the interval 3–106 (IFTKIINREL…PTRSLSDFGF (104 aa)). Residues 90 to 94 (HLHIH) carry the Histidine triad motif motif.

This is an uncharacterized protein from Mycobacterium tuberculosis (strain ATCC 25618 / H37Rv).